The sequence spans 205 residues: Cryptic plasmid protein C (205 aa).

Residues 142 to 205 (THGYSDPDDP…RAGNAGKGRF (64 aa)) form a disordered region. Polar residues predominate over residues 155 to 174 (QSMTQAKDLPRNTQEAAQSI). Basic residues predominate over residues 189-205 (QAKKPRRRAGNAGKGRF).

The protein is Cryptic plasmid protein C (cppC) of Neisseria gonorrhoeae.